Consider the following 339-residue polypeptide: GTPase Era (339 aa).

In terms of domain architecture, RPE1 insert spans 4–48 (RHLAKFAYREEFKGDTEALAAAVREDASTGSTSQLPLEVQFGKMS). Residues 51-220 (KTVSVCIIGR…ITSKAKISPW (170 aa)) form the Era-type G domain. Residues 59–66 (GRPNSGKS) are G1. Position 59–66 (59–66 (GRPNSGKS)) interacts with GTP. The segment at 85-89 (QTTRS) is G2. The tract at residues 106–109 (DTPG) is G3. GTP contacts are provided by residues 106–110 (DTPGI) and 168–171 (NKID). The G4 stretch occupies residues 168–171 (NKID). The segment at 196–198 (ISA) is G5. The region spanning 248–325 (LQKELPYKLT…HLFLFVKVRE (78 aa)) is the KH type-2 domain.

This sequence belongs to the TRAFAC class TrmE-Era-EngA-EngB-Septin-like GTPase superfamily. Era GTPase family. As to quaternary structure, monomer.

The protein resides in the cytoplasm. It localises to the cell inner membrane. Functionally, an essential GTPase that binds both GDP and GTP, with rapid nucleotide exchange. Plays a role in 16S rRNA processing and 30S ribosomal subunit biogenesis and possibly also in cell cycle regulation and energy metabolism. The polypeptide is GTPase Era (Rickettsia conorii (strain ATCC VR-613 / Malish 7)).